A 479-amino-acid polypeptide reads, in one-letter code: MGEEETIVNDENSSKPKPSPKLTLLPLVFLIFYEVSGGPFGVEDSVKSGGGPLLALLGFLIFPLIWSIPEALVTAELATSFPENGGYVVWISSAFGPFWGFQEGFWKWFSGVMDNALYPVLFLDYLKHSFPVLDHVAARVPALLVITFSLTYLNYRGLHIVGFSAVVLAVFSLCPFVVMALLAVPNIRPKRWLFVDTQKINWRGYFNTMFWNLNYWDKASTLAGEVDRPGKTFPKALFGAVLLVMGSYLIPLMAGTGALSSSTSGEWSDGYFAEVGMLIGGVWLKGWIQAAAAMSNLGLFEAEMSSDAFQLLGMSEIGMLPAFFAQRSKYGTPTISILCSATGVIFLSWMSFQEIIEFLNFLYALGMLLEFAAFVKLRIKKPDLHRPYRVPLNTFGVSMLCLPPSLLVILVMVLAAPKTFLISGVIIVLGFCLYPFLTLVKEKQWARFIPEETRPVSGVSSESQLDEEHGDESAASLLP.

12 helical membrane-spanning segments follow: residues Leu-22–Val-42, Leu-53–Val-73, Gly-86–Trp-106, Phe-130–Leu-150, Ile-160–Ala-180, Ala-236–Thr-256, Val-275–Ser-295, Met-304–Phe-324, Thr-332–Phe-352, Ile-355–Val-375, Phe-395–Ala-415, and Phe-420–Val-440. Positions Arg-454–Pro-479 are disordered.

The protein belongs to the amino acid-polyamine-organocation (APC) superfamily. Polyamine:cation symporter (PHS) (TC 2.A.3.12) family.

The protein resides in the cell membrane. Functionally, probable cell membrane polyamine/proton symporter involved in the polyamine uptake in cells. In Arabidopsis thaliana (Mouse-ear cress), this protein is Probable polyamine transporter At3g19553.